Here is a 391-residue protein sequence, read N- to C-terminus: Probable protein phosphatase 2C 32 (391 aa).

Positions 1–53 are disordered; sequence MSCTVAIPSSPVFSPSRRPLSCKAASASASPESVSVAASSPAQAAPPAGSPLR. Over residues 8–51 the composition is skewed to low complexity; sequence PSSPVFSPSRRPLSCKAASASASPESVSVAASSPAQAAPPAGSP. Residues 95-115 traverse the membrane as a helical segment; that stretch reads LVVPVCGGAAAAAAAAAVAAV. Positions 129-386 constitute a PPM-type phosphatase domain; that stretch reads EFAVYCRRGK…DDISIVIIQL (258 aa). Mn(2+) contacts are provided by D168, G169, D332, and D377.

This sequence belongs to the PP2C family. The cofactor is Mg(2+). Mn(2+) is required as a cofactor.

Its subcellular location is the membrane. It carries out the reaction O-phospho-L-seryl-[protein] + H2O = L-seryl-[protein] + phosphate. It catalyses the reaction O-phospho-L-threonyl-[protein] + H2O = L-threonyl-[protein] + phosphate. This chain is Probable protein phosphatase 2C 32, found in Oryza sativa subsp. japonica (Rice).